We begin with the raw amino-acid sequence, 228 residues long: uncharacterized protein (228 aa).

The ABC transporter domain maps to 7–228; it reads VEVHHLKKSV…LVNGQLQEEA (222 aa). Residue 43–50 coordinates ATP; sequence GESGSGKS.

It belongs to the ABC transporter superfamily.

This is an uncharacterized protein from Escherichia coli O157:H7.